Reading from the N-terminus, the 401-residue chain is Probable tRNA sulfurtransferase (401 aa).

In terms of domain architecture, THUMP spans 60–165; that stretch reads EAVMARLKHV…EDATYLTFRD (106 aa). Residues 183 to 184, 208 to 209, R265, G287, and Q296 contribute to the ATP site; these read MI and HF.

Belongs to the ThiI family.

It is found in the cytoplasm. The enzyme catalyses [ThiI sulfur-carrier protein]-S-sulfanyl-L-cysteine + a uridine in tRNA + 2 reduced [2Fe-2S]-[ferredoxin] + ATP + H(+) = [ThiI sulfur-carrier protein]-L-cysteine + a 4-thiouridine in tRNA + 2 oxidized [2Fe-2S]-[ferredoxin] + AMP + diphosphate. It carries out the reaction [ThiS sulfur-carrier protein]-C-terminal Gly-Gly-AMP + S-sulfanyl-L-cysteinyl-[cysteine desulfurase] + AH2 = [ThiS sulfur-carrier protein]-C-terminal-Gly-aminoethanethioate + L-cysteinyl-[cysteine desulfurase] + A + AMP + 2 H(+). Its pathway is cofactor biosynthesis; thiamine diphosphate biosynthesis. Its function is as follows. Catalyzes the ATP-dependent transfer of a sulfur to tRNA to produce 4-thiouridine in position 8 of tRNAs, which functions as a near-UV photosensor. Also catalyzes the transfer of sulfur to the sulfur carrier protein ThiS, forming ThiS-thiocarboxylate. This is a step in the synthesis of thiazole, in the thiamine biosynthesis pathway. The sulfur is donated as persulfide by IscS. This is Probable tRNA sulfurtransferase from Bacillus licheniformis (strain ATCC 14580 / DSM 13 / JCM 2505 / CCUG 7422 / NBRC 12200 / NCIMB 9375 / NCTC 10341 / NRRL NRS-1264 / Gibson 46).